Reading from the N-terminus, the 80-residue chain is Exodeoxyribonuclease 7 small subunit (80 aa).

The segment at 60–80 is disordered; it reads LIDSDGTEHNLDPNNASAPEE. Over residues 61–70 the composition is skewed to basic and acidic residues; the sequence is IDSDGTEHNL. Residues 71–80 show a composition bias toward polar residues; the sequence is DPNNASAPEE.

The protein belongs to the XseB family. In terms of assembly, heterooligomer composed of large and small subunits.

It is found in the cytoplasm. It carries out the reaction Exonucleolytic cleavage in either 5'- to 3'- or 3'- to 5'-direction to yield nucleoside 5'-phosphates.. Its function is as follows. Bidirectionally degrades single-stranded DNA into large acid-insoluble oligonucleotides, which are then degraded further into small acid-soluble oligonucleotides. In Lactobacillus acidophilus (strain ATCC 700396 / NCK56 / N2 / NCFM), this protein is Exodeoxyribonuclease 7 small subunit.